Here is a 431-residue protein sequence, read N- to C-terminus: MSPRVGVTLSGRYRLQRLIATGGMGQVWEAVDNRLGRRVAVKVLKSEFSSDPEFIERFRAEARTTAMLNHPGIASVHDYGESQMNGEGRTAYLVMELVNGEPLNSVLKRTGRLSLRHALDMLEQTGRALQIAHAAGLVHRDVKPGNILITPTGQVKITDFGIAKAVDAAPVTQTGMVMGTAQYIAPEQALGHDASPASDVYSLGVVGYEAVSGKRPFAGDGALTVAMKHIKEPPPPLPPDLPPNVRELIEITLVKNPAMRYRSGGPFADAVAAVRAGRRPPRPSQTPPPGRAAPAAIPSGTTARVAANSAGRTAASRRSRPATGGHRPPRRTFSSGQRALLWAAGVLGALAIIIAVLLVIKAPGDNSPQQAPTPTVTTTGNPPASNTGGTDASPRLNWTERGETRHSGLQSWVVPPTPHSRASLARYEIAQ.

Topologically, residues 1–339 (MSPRVGVTLS…RRTFSSGQRA (339 aa)) are cytoplasmic. One can recognise a Protein kinase domain in the interval 13–272 (YRLQRLIATG…SGGPFADAVA (260 aa)). Residues 19-27 (IATGGMGQV) and Lys42 each bind ATP. Asp141 serves as the catalytic Proton acceptor. Positions 276–333 (AGRRPPRPSQTPPPGRAAPAAIPSGTTARVAANSAGRTAASRRSRPATGGHRPPRRTF) are disordered. The span at 282–291 (RPSQTPPPGR) shows a compositional bias: pro residues. Residues 292-314 (AAPAAIPSGTTARVAANSAGRTA) are compositionally biased toward low complexity. Residues 340–360 (LLWAAGVLGALAIIIAVLLVI) form a helical membrane-spanning segment. The Extracellular portion of the chain corresponds to 361–431 (KAPGDNSPQQ…ASLARYEIAQ (71 aa)). Residues 366–418 (NSPQQAPTPTVTTTGNPPASNTGGTDASPRLNWTERGETRHSGLQSWVVPPTP) are disordered. Residues 368–384 (PQQAPTPTVTTTGNPPA) show a composition bias toward low complexity.

It belongs to the protein kinase superfamily. Ser/Thr protein kinase family. Autophosphorylated.

It is found in the cell membrane. It catalyses the reaction L-seryl-[protein] + ATP = O-phospho-L-seryl-[protein] + ADP + H(+). It carries out the reaction L-threonyl-[protein] + ATP = O-phospho-L-threonyl-[protein] + ADP + H(+). Its function is as follows. Protein kinase that regulates many aspects of mycobacterial physiology. Is a key component of a signal transduction pathway that regulates cell growth, cell shape and cell division via phosphorylation of target proteins. The protein is Serine/threonine-protein kinase PknA (pknA) of Mycobacterium bovis (strain ATCC BAA-935 / AF2122/97).